The chain runs to 307 residues: MAKHVAVLMGGLSAEREVSLCSGAACAEALRGEGFEVTEVDVDRQIGERLAALRPDVAFNALHGRFGEDGIIQGVLEMLAIPYTHSGVLASALAMRKDRARDVLAAAGVPIAKGVTVDRLEAAQRHILPPPYVIKPLGEGSSFGVFIVREDQAYPPQELTRSDWAFGNRVLVESYIGGRELTCAVIGEKAHDVIEIKAVGGGWYDYDAKYRKGGSIHILPAELKRNIYQNVQLLSLKAHKALGCRGVSRTDFRYDDRPEGTGELIVLEVNTQPGMTETSLLPEIAAYAGLSFGELVRWMVDDASCDR.

The ATP-grasp domain occupies 101–301; sequence RDVLAAAGVP…FGELVRWMVD (201 aa). 128 to 182 provides a ligand contact to ATP; sequence LPPPYVIKPLGEGSSFGVFIVREDQAYPPQELTRSDWAFGNRVLVESYIGGRELT. Residues Asp251, Glu268, and Asn270 each coordinate Mg(2+).

The protein belongs to the D-alanine--D-alanine ligase family. It depends on Mg(2+) as a cofactor. Mn(2+) is required as a cofactor.

It is found in the cytoplasm. It catalyses the reaction 2 D-alanine + ATP = D-alanyl-D-alanine + ADP + phosphate + H(+). The protein operates within cell wall biogenesis; peptidoglycan biosynthesis. Functionally, cell wall formation. The chain is D-alanine--D-alanine ligase from Beijerinckia indica subsp. indica (strain ATCC 9039 / DSM 1715 / NCIMB 8712).